The primary structure comprises 313 residues: MDSEDNSAPRGERGIEQFSHVSVLSQEAIDFLAIRRGGTYLDATLGLGGHSYEIAKRLGAQGHLIALDKDTNALEMARRRLEQVPDDLKEDWPQITLLHASFAEMKQHIASKSLDGVLADLGISSMQLQDAGRGFSFQAEGPLDMRMNPHGDLTAEQVVNHTSERELADVIYEFGEERRSRRIARAICRARPIRTTAHLAQVISVAARPMNQAERRIHPATKTFQALRIFVNHELDDLKELLASVPSRLVPRGRLVVISFHSLEDRIVKDSLRDGASAGKYELLTKKPVTATEEEIDRNPRSRSAKLRAAARK.

S-adenosyl-L-methionine-binding positions include 48-50 (GGH), D68, F102, D120, and Q127. The segment at 290–313 (TATEEEIDRNPRSRSAKLRAAARK) is disordered. Over residues 301–313 (RSRSAKLRAAARK) the composition is skewed to basic residues.

This sequence belongs to the methyltransferase superfamily. RsmH family.

The protein resides in the cytoplasm. It catalyses the reaction cytidine(1402) in 16S rRNA + S-adenosyl-L-methionine = N(4)-methylcytidine(1402) in 16S rRNA + S-adenosyl-L-homocysteine + H(+). Functionally, specifically methylates the N4 position of cytidine in position 1402 (C1402) of 16S rRNA. In Koribacter versatilis (strain Ellin345), this protein is Ribosomal RNA small subunit methyltransferase H.